Consider the following 41-residue polypeptide: ORF3c protein (41 aa).

Functionally, may play a role in host modulation. The polypeptide is ORF3c protein (Severe acute respiratory syndrome coronavirus 2 (2019-nCoV)).